A 448-amino-acid chain; its full sequence is MVSISASGGYAMPCCCESQELQSSDMETPAVGTPEFDRNVPRICGVCGDRATGFHFNAMTCEGCKGFFRRSMKRKAMFTCPFSGDCKITKDNRRHCQACRLKRCVDIGMMKEFILTDEEVQRKREMILKRKEEEALKESLKPKLSEEQQKVINILLEAHHKTFDTTYSDFNKFRPPVRSKFSSSTATHSSSVVSQDFSSEDSNDVFGSDAFGAFPEPMEPQMFSNLDLSEESDESPSMNIELPHLPMLPHLADLVSYSIQKVIGFAKMIPGFRDLTAEDQIALLKSSAIEVIMLRSNQSFTMEDMSWTCGSNDFKYKVSDVTQAGHSMDLLEPLVKFQVGLKKLNLHEEEHVLLMAICILSPDRPGVQDTSLVESIQDRLSDTLQTYIRCRHPPPGSRLLYAKMIQKLADLRSLNEEHSKQYRCLSFQPEHSMQLTPLVLEVFGNEIS.

A DNA-binding region (nuclear receptor) is located at residues 41 to 116 (PRICGVCGDR…IGMMKEFILT (76 aa)). 8 residues coordinate Zn(2+): C44, C47, C61, C64, C80, C86, C96, and C99. NR C4-type zinc fingers lie at residues 44–64 (CGVCGDRATGFHFNAMTCEGC) and 80–104 (CPFSGDCKITKDNRRHCQACRLKRC). Positions 117–146 (DEEVQRKREMILKRKEEEALKESLKPKLSE) are hinge. In terms of domain architecture, NR LBD spans 147-444 (EQQKVINILL…LTPLVLEVFG (298 aa)). S258 contacts calcitriol. The interaction with coactivator LXXLL motif stretch occupies residues 267 to 285 (KMIPGFRDLTAEDQIALLK). The calcitriol site is built by R295, S299, H326, and H418. Positions 437–445 (PLVLEVFGN) match the 9aaTAD motif.

Belongs to the nuclear hormone receptor family. NR1 subfamily. In terms of assembly, homodimer in the absence of bound vitamin D3. Heterodimer with RXRA after vitamin D3 binding.

The protein resides in the nucleus. The protein localises to the cytoplasm. Functionally, nuclear receptor for calcitriol, the active form of vitamin D3 which mediates the action of this vitamin on cells. Enters the nucleus upon vitamin D3 binding where it forms heterodimers with the retinoid X receptor/RXR. The VDR-RXR heterodimers bind to specific response elements on DNA and activate the transcription of vitamin D3-responsive target genes. Plays a central role in calcium homeostasis. Also functions as a receptor for the secondary bile acid lithocholic acid (LCA) and its metabolites. This is Vitamin D3 receptor (VDR) from Coturnix japonica (Japanese quail).